Here is a 477-residue protein sequence, read N- to C-terminus: Histidine--tRNA ligase (477 aa).

The protein belongs to the class-II aminoacyl-tRNA synthetase family. Homodimer.

It localises to the cytoplasm. It catalyses the reaction tRNA(His) + L-histidine + ATP = L-histidyl-tRNA(His) + AMP + diphosphate + H(+). The protein is Histidine--tRNA ligase (hisS) of Xanthomonas campestris pv. campestris (strain ATCC 33913 / DSM 3586 / NCPPB 528 / LMG 568 / P 25).